The following is a 261-amino-acid chain: Thiamine thiazole synthase (261 aa).

NAD(+) contacts are provided by residues Ser-40, Glu-59 to Arg-60, Gly-67, Val-133, and His-159 to Asp-161. Asp-161 and His-176 together coordinate Fe cation. 2 residues coordinate NAD(+): Ser-179 and Met-226. Arg-236 lines the glycine pocket.

This sequence belongs to the THI4 family. Homooctamer; tetramer of dimers. Fe(2+) serves as cofactor.

The enzyme catalyses hydrogen sulfide + glycine + NAD(+) = ADP-5-ethyl-4-methylthiazole-2-carboxylate + nicotinamide + 3 H2O + H(+). The protein operates within cofactor biosynthesis; thiamine diphosphate biosynthesis. Its function is as follows. Involved in the biosynthesis of the thiazole moiety of thiamine. Catalyzes the conversion of NAD and glycine to adenosine diphosphate 5-(2-hydroxyethyl)-4-methylthiazole-2-carboxylate (ADT), an adenylated thiazole intermediate, using free sulfide as a source of sulfur. The chain is Thiamine thiazole synthase from Methanococcus vannielii (strain ATCC 35089 / DSM 1224 / JCM 13029 / OCM 148 / SB).